A 307-amino-acid chain; its full sequence is N-acetylmuramic acid 6-phosphate etherase 2 (307 aa).

The 164-residue stretch at Ile-62–Lys-225 folds into the SIS domain. Residue Glu-90 is the Proton donor of the active site. Glu-121 is a catalytic residue.

Belongs to the GCKR-like family. MurNAc-6-P etherase subfamily. Homodimer.

It catalyses the reaction N-acetyl-D-muramate 6-phosphate + H2O = N-acetyl-D-glucosamine 6-phosphate + (R)-lactate. The protein operates within amino-sugar metabolism; 1,6-anhydro-N-acetylmuramate degradation. It participates in amino-sugar metabolism; N-acetylmuramate degradation. Its pathway is cell wall biogenesis; peptidoglycan recycling. Its function is as follows. Specifically catalyzes the cleavage of the D-lactyl ether substituent of MurNAc 6-phosphate, producing GlcNAc 6-phosphate and D-lactate. Together with AnmK, is also required for the utilization of anhydro-N-acetylmuramic acid (anhMurNAc) either imported from the medium or derived from its own cell wall murein, and thus plays a role in cell wall recycling. The protein is N-acetylmuramic acid 6-phosphate etherase 2 of Vibrio cholerae serotype O1 (strain ATCC 39315 / El Tor Inaba N16961).